The primary structure comprises 295 residues: Defective in cullin neddylation protein AAR3 (295 aa).

Positions 1–180 constitute a DCUN1 domain; sequence MDSSPVSARF…LIDDFVEHMY (180 aa). The Nuclear localization signal signature appears at 214–221; that stretch reads YRRPHTGL. The segment at 214-251 is disordered; it reads YRRPHTGLRNIPGLKRKTSKKNDEEEEDEDEEVLETQN. Positions 237 to 247 are enriched in acidic residues; sequence EEEEDEDEEVL.

The protein resides in the nucleus. In terms of biological role, may contribute to the neddylation of all cullins by transferring NEDD8 from N-terminally acetylated NEDD8-conjugating E2s enzyme to different cullin C-terminal domain-RBX complexes; neddylation of cullins play an essential role in the regulation of SCF-type complexes activity. Regulates responses to the synthetic auxin 2,4-dichlorophenoxyacetic acid (2,4-D) in roots, probably by modulating the SCF(TIR1) ubiquitin E3 ligase complex-mediated proteolysis. The chain is Defective in cullin neddylation protein AAR3 from Arabidopsis thaliana (Mouse-ear cress).